The following is a 335-amino-acid chain: Solute-binding protein Veis_3954 (335 aa).

Residues 1–34 (MPSTRPLPRPSSRSLRRLALGLGLAFGLGATAAA) form the signal peptide. (R)-pantoate contacts are provided by residues Q50, E82, 155-158 (NGFR), R179, and N219.

It belongs to the bacterial solute-binding protein 7 family. As to quaternary structure, the complex is comprised of an extracytoplasmic solute-binding protein and a heteromeric permease formed by two transmembrane proteins.

It localises to the periplasm. In terms of biological role, solute-binding protein that binds (R)-pantoate and D-erythronate (in vitro). Probably part of a tripartite ATP-independent periplasmic (TRAP) transport system that mediates solute transport into the cytoplasm. This Verminephrobacter eiseniae (strain EF01-2) protein is Solute-binding protein Veis_3954.